The primary structure comprises 152 residues: Protein PLANT CADMIUM RESISTANCE 2 (152 aa).

A helical transmembrane segment spans residues 57–79 (TAGALYALIAVVTGCACIYSCFY).

The protein belongs to the cornifelin family. In terms of assembly, homooligomer. Expressed in roots, leaves, shoots, stems, flowers and siliques. In leaves, restricted mainly to the vascular tissue. Expressed in all cells in the root tip, in the vascular tissue and the epidermis in the elongation zone, and only in the epidermal cells in the root hair zone.

Its subcellular location is the cell membrane. In terms of biological role, zinc transporter acting in both zinc extrusion and long-distance zinc transport. Involved in the loading of zinc into the xyleme and in the detoxification of excess zinc at the epidermal cells. Acts independently from the zinc transporters HMA2 and HMA4. May be also involved in cadmium resistance. In Arabidopsis thaliana (Mouse-ear cress), this protein is Protein PLANT CADMIUM RESISTANCE 2 (PCR2).